Consider the following 392-residue polypeptide: tRNA-specific 2-thiouridylase MnmA (392 aa).

ATP is bound by residues 18 to 25 and Met44; that span reads GMSGGVDS. The interaction with target base in tRNA stretch occupies residues 104-106; it reads NPD. Cys109 (nucleophile) is an active-site residue. An intrachain disulfide couples Cys109 to Cys208. Gly133 serves as a coordination point for ATP. Residues 158-160 form an interaction with tRNA region; the sequence is KDQ. Cys208 functions as the Cysteine persulfide intermediate in the catalytic mechanism. The tract at residues 320–321 is interaction with tRNA; that stretch reads RY.

This sequence belongs to the MnmA/TRMU family.

The protein resides in the cytoplasm. It catalyses the reaction S-sulfanyl-L-cysteinyl-[protein] + uridine(34) in tRNA + AH2 + ATP = 2-thiouridine(34) in tRNA + L-cysteinyl-[protein] + A + AMP + diphosphate + H(+). Catalyzes the 2-thiolation of uridine at the wobble position (U34) of tRNA, leading to the formation of s(2)U34. The sequence is that of tRNA-specific 2-thiouridylase MnmA from Marinobacter nauticus (strain ATCC 700491 / DSM 11845 / VT8) (Marinobacter aquaeolei).